The following is a 303-amino-acid chain: Phosphoribosylaminoimidazole-succinocarboxamide synthase (303 aa).

Belongs to the SAICAR synthetase family.

The catalysed reaction is 5-amino-1-(5-phospho-D-ribosyl)imidazole-4-carboxylate + L-aspartate + ATP = (2S)-2-[5-amino-1-(5-phospho-beta-D-ribosyl)imidazole-4-carboxamido]succinate + ADP + phosphate + 2 H(+). Its pathway is purine metabolism; IMP biosynthesis via de novo pathway; 5-amino-1-(5-phospho-D-ribosyl)imidazole-4-carboxamide from 5-amino-1-(5-phospho-D-ribosyl)imidazole-4-carboxylate: step 1/2. The sequence is that of Phosphoribosylaminoimidazole-succinocarboxamide synthase (ADE1) from Pichia angusta (Yeast).